A 258-amino-acid polypeptide reads, in one-letter code: Steroid 5-alpha-reductase DET2 (258 aa).

6 helical membrane-spanning segments follow: residues 8 to 28, 49 to 69, 77 to 97, 109 to 129, 144 to 164, and 201 to 221; these read FHYC…SLYF, LAWF…FPSG, SFLL…LYPL, FPVS…YLQA, LFWW…WVNV, and IMEW…GFFL.

The protein belongs to the steroid 5-alpha reductase family. Accumulates in fibers (seed trichomes) during both their initiation and elongation phases. Also present in roots, hypocotyls, leaves, flowers and ovules, and barely in cotyledons.

It is found in the membrane. It carries out the reaction a 3-oxo-5alpha-steroid + NADP(+) = a 3-oxo-Delta(4)-steroid + NADPH + H(+). Its pathway is plant hormone biosynthesis; brassinosteroid biosynthesis. Involved in a reduction step in the biosynthesis of the plant steroid, brassinolide (BL). Promotes cotton fibers (seed trichomes) initiation and elongation. The sequence is that of Steroid 5-alpha-reductase DET2 from Gossypium hirsutum (Upland cotton).